The primary structure comprises 334 residues: Beta-ketoacyl-[acyl-carrier-protein] synthase III (334 aa).

Active-site residues include cysteine 116 and histidine 256. The ACP-binding stretch occupies residues 257–261 (QANLR). Residue asparagine 286 is part of the active site.

The protein belongs to the thiolase-like superfamily. FabH family. As to quaternary structure, homodimer.

It is found in the cytoplasm. It catalyses the reaction malonyl-[ACP] + acetyl-CoA + H(+) = 3-oxobutanoyl-[ACP] + CO2 + CoA. It functions in the pathway lipid metabolism; fatty acid biosynthesis. Functionally, catalyzes the condensation reaction of fatty acid synthesis by the addition to an acyl acceptor of two carbons from malonyl-ACP. Catalyzes the first condensation reaction which initiates fatty acid synthesis and may therefore play a role in governing the total rate of fatty acid production. Possesses both acetoacetyl-ACP synthase and acetyl transacylase activities. Its substrate specificity determines the biosynthesis of branched-chain and/or straight-chain of fatty acids. This chain is Beta-ketoacyl-[acyl-carrier-protein] synthase III, found in Phocaeicola vulgatus (strain ATCC 8482 / DSM 1447 / JCM 5826 / CCUG 4940 / NBRC 14291 / NCTC 11154) (Bacteroides vulgatus).